We begin with the raw amino-acid sequence, 349 residues long: NADH-quinone oxidoreductase subunit H (349 aa).

Helical transmembrane passes span 20-42 (WTLI…LTYF), 88-108 (GIFI…WAVV), 123-143 (LLYI…SGWA), 167-187 (MGFS…VEIV), 202-222 (FLSW…ISGV), 249-269 (GMAF…VSAL), 284-304 (FLPD…FLFL), and 325-345 (VFVP…MSPL).

It belongs to the complex I subunit 1 family. NDH-1 is composed of 14 different subunits. Subunits NuoA, H, J, K, L, M, N constitute the membrane sector of the complex.

The protein resides in the cell inner membrane. The enzyme catalyses a quinone + NADH + 5 H(+)(in) = a quinol + NAD(+) + 4 H(+)(out). Functionally, NDH-1 shuttles electrons from NADH, via FMN and iron-sulfur (Fe-S) centers, to quinones in the respiratory chain. The immediate electron acceptor for the enzyme in this species is believed to be ubiquinone. Couples the redox reaction to proton translocation (for every two electrons transferred, four hydrogen ions are translocated across the cytoplasmic membrane), and thus conserves the redox energy in a proton gradient. This subunit may bind ubiquinone. The polypeptide is NADH-quinone oxidoreductase subunit H (Dechloromonas aromatica (strain RCB)).